Consider the following 1006-residue polypeptide: Probable sulfite reductase [NADPH] flavoprotein component (1006 aa).

An FAD-binding FR-type domain is found at 622–852 (EKVFTVHVRA…AVKTSVMKLP (231 aa)). FAD is bound by residues 658–669 (YDIGEALGVYGV) and 788–798 (IKRREYSISSS).

The cofactor is FAD. It depends on FMN as a cofactor.

The enzyme catalyses hydrogen sulfide + 3 NADP(+) + 3 H2O = sulfite + 3 NADPH + 4 H(+). It functions in the pathway sulfur metabolism; hydrogen sulfide biosynthesis; hydrogen sulfide from sulfite (NADPH route): step 1/1. Its function is as follows. This enzyme catalyzes the 6-electron reduction of sulfite to sulfide. This is one of several activities required for the biosynthesis of L-cysteine from sulfate. The polypeptide is Probable sulfite reductase [NADPH] flavoprotein component (Schizosaccharomyces pombe (strain 972 / ATCC 24843) (Fission yeast)).